A 156-amino-acid polypeptide reads, in one-letter code: Baculoviral IAP repeat-containing protein 5.2 (156 aa).

A BIR repeat occupies 30–100 (RLSTFANWPF…KHSPSCLFIA (71 aa)). The residue at position 46 (T46) is a Phosphothreonine; by CDK1. C69, C72, H89, and C96 together coordinate Zn(2+).

The protein belongs to the IAP family. In terms of assembly, component of the CPC at least composed of survivin/birc5, incenp, cdca8/borealin and/or cdca9/dasra-A, and aurkb/aurora-B. Interacts directly with incenp (via N-terminus). Interacts with rxra; the interaction is stronger in the absence of 9-cis retinoic acids. Ubiquitination is required for centrosome-targeting.

The protein localises to the cytoplasm. Its subcellular location is the nucleus. The protein resides in the chromosome. It is found in the centromere. It localises to the cytoskeleton. The protein localises to the spindle. Component of the chromosomal passenger complex (CPC), a complex that acts as a key regulator of mitosis. The CPC complex has essential functions at the centromere in ensuring correct chromosome alignment and segregation and is required for chromatin-induced microtubule stabilization and spindle assembly. Does not appear to exhibit anti-apoptotic activity. Plays a role in increasing blood vessel size during development. This chain is Baculoviral IAP repeat-containing protein 5.2 (birc5.2), found in Xenopus tropicalis (Western clawed frog).